The following is a 92-amino-acid chain: MDLGQRVVRVIPLAPLPVRVYNAGGLRVDFFPRFFGRSPQGVGVGFARLKLSASVGSNGFRLTRAVWIFWLCFLVSGLSRAFLVYFLSVIRI.

A helical transmembrane segment spans residues Ala-65–Phe-86.

It localises to the membrane. This is an uncharacterized protein from Treponema pallidum (strain Nichols).